Reading from the N-terminus, the 440-residue chain is UDP-N-acetylmuramoylalanine--D-glutamate ligase (440 aa).

115-121 contacts ATP; sequence GSNGKST.

It belongs to the MurCDEF family.

Its subcellular location is the cytoplasm. It catalyses the reaction UDP-N-acetyl-alpha-D-muramoyl-L-alanine + D-glutamate + ATP = UDP-N-acetyl-alpha-D-muramoyl-L-alanyl-D-glutamate + ADP + phosphate + H(+). It participates in cell wall biogenesis; peptidoglycan biosynthesis. Cell wall formation. Catalyzes the addition of glutamate to the nucleotide precursor UDP-N-acetylmuramoyl-L-alanine (UMA). In Vibrio cholerae serotype O1 (strain ATCC 39315 / El Tor Inaba N16961), this protein is UDP-N-acetylmuramoylalanine--D-glutamate ligase.